The sequence spans 1499 residues: Pleiotropic ABC efflux transporter of multiple drugs CDR1 (1499 aa).

Over residues 1 to 11 the composition is skewed to basic and acidic residues; that stretch reads MSLASDKKDAD. The segment at 1–29 is disordered; it reads MSLASDKKDADVASTTTTAQDDDNLSTYH. N24, N96, and N99 each carry an N-linked (GlcNAc...) asparagine glycan. Residues 146-399 enclose the ABC transporter 1 domain; it reads VYNTVVPSTA…FQKMGYVSPE (254 aa). Position 307 is a phosphoserine (S307). Residue N323 is glycosylated (N-linked (GlcNAc...) asparagine). Residue S484 is modified to Phosphoserine. A helical membrane pass occupies residues 510–530; it reads GVTLFMVIGNSSMAFILGSMF. Residue N537 is glycosylated (N-linked (GlcNAc...) asparagine). A run of 5 helical transmembrane segments spans residues 548–568, 597–617, 622–642, 654–674, and 763–783; these read AMFF…FSLF, VPAK…LVNF, GVFF…SHLF, AAMV…GFAI, and GFGI…ILCE. N813 is a glycosylation site (N-linked (GlcNAc...) asparagine). The ABC transporter 2 domain occupies 857-1099; the sequence is FHWRNLCYDV…TMIDYFESHG (243 aa). 893–900 is a binding site for ATP; the sequence is GASGAGKT. N-linked (GlcNAc...) asparagine glycosylation is present at N1159. Transmembrane regions (helical) follow at residues 1193 to 1213, 1228 to 1248, and 1278 to 1298; these read YLWS…FTFF, AVFM…PSFV, and IPWN…AIGF. N-linked (GlcNAc...) asparagine glycosylation occurs at N1301. The next 2 membrane-spanning stretches (helical) occupy residues 1314–1334 and 1342–1362; these read LFWL…LFCI and AAAN…GVLV. N1412 carries an N-linked (GlcNAc...) asparagine glycan. A helical membrane pass occupies residues 1466 to 1486; sequence WGIFICYIAFNYIAGIFLYWL.

It belongs to the ABC transporter superfamily. In terms of processing, phosphorylated at Ser-307 and Ser-484. Ser-307 and Ser-484 are dephosphorylated on glucose depletion and independently rephosphorylated during glucose exposure or under stress.

It is found in the cell membrane. Inhibited by clorgyline. Inhibited by RC21v3, a 4-methoxy-2,3,6-trimethylbenzenesulphonyl derivative of the D-octapeptide D-FFKWQRRR, via the interaction with the ectodomain. FK506, enniatin, milbemycin alpha-11, and milbemycin beta-9 also inhibit CDR1 activity. Inhibited by milbemycin A3/A4 oxim derivatives. Its function is as follows. Pleiotropic ABC efflux transporter that transports and confers resistance to structurally and functionally unrelated compounds including rhodamine 6G, Nile red, caspofungin, cycloheximide, or azoles such as fluconazole, itraconazole, ketoconazole, posaconazole, voriconazole, and isavuconazole. Chlorbromuron, itraconazole, yohimbine, ketoconazole, miconazole, clotrimazole, DE-11, tamoxifen, quinidine, verapamil can compete for rhodamine 6G's binding site(s) while compounds such as propanil, chloramphenicol, benomyl, voriconazole, tritylimidazole, ketoconazole, miconazole, tamoxifen, gefitinib shared binding site(s) with fluconazole. Nile red mediated efflux appears to be relatively more specific since only five compounds such as ZW3-12, rhodamine 123, miconazole, clotrimazole, and itraconazole can inhibit its accumulation. Does not use as substrates 4-nitroquinoline 1-oxide (4-NQO) and disulfiram. Does not play a role in the azole resistance in mature biofilms. The chain is Pleiotropic ABC efflux transporter of multiple drugs CDR1 from Candida glabrata (strain ATCC 2001 / BCRC 20586 / JCM 3761 / NBRC 0622 / NRRL Y-65 / CBS 138) (Yeast).